The following is a 412-amino-acid chain: Divalent metal cation transporter MntH (412 aa).

Helical transmembrane passes span 19 to 39 (LALMGPAFIAAIGYIDPGNFA), 46 to 66 (ASFGYKLLWVVVWANLMAMLI), 94 to 114 (VWFYWVQAEIIAMATDLAEFI), 122 to 142 (LILGISLLQGAVLTGIATFLI), 156 to 176 (VIGGLLLFVAAAYIVELIFSQ), 196 to 216 (AVFLAAGVLGATIMPHVIYLH), 241 to 261 (IAMTIAGFVNLAMMATAAAAF), 290 to 310 (VFGLSLVAAGLSSTVVGTLAG), 329 to 349 (TITMMPSFIVILMGLDPTRIL), 350 to 370 (VMSQVLLSFGIALALVPLLIF), and 389 to 409 (IGWMIVVLVVALNIWLLVGTA).

The protein belongs to the NRAMP family.

The protein localises to the cell inner membrane. Functionally, h(+)-stimulated, divalent metal cation uptake system. This chain is Divalent metal cation transporter MntH, found in Citrobacter koseri (strain ATCC BAA-895 / CDC 4225-83 / SGSC4696).